The primary structure comprises 465 residues: MRGEWQEFKTPAGKKYYYNKNTKQSRWEKPNLKKGSNLESNAKESQTERKPTFSLELVNGWHLIIYNDGTKLYFNDDSKEFKNDISQEDDSRCRSLIESLDKEKLVLLIGVARGYTMREEDIDKILESCNEEIHLFKRNQDEVERKDEISEEAGDVKSPLQESHTGLVSGYGSSSGEEDEEEDEEEDEENEEQIVNQDISIIDDLNRIDTDDIDERNIFFELFDRYKLDKFSTWSLQSKKIENDPDFYKIRDDTVRESLFEEWCGERSGNATAEESDSEDNSEDDSEVLEPTKYHYLAQIVANAGTIAPDTIPQDIRKQQKALYKAYKIKEYIPSKRDQDKFVSQLLFYYKTFDLEQRKEIFCDCLRDHERDFTGAVESLRQDKELIDRWQTLLKAPADSSSIEDILLSIEHRCCVSPIVVTEPRYYVVGILEKTVVWVRWLAAEVGPSSRFTPVGAGNEPINPE.

A WW domain is found at 1–32 (MRGEWQEFKTPAGKKYYYNKNTKQSRWEKPNL). Disordered stretches follow at residues 28-49 (EKPNLKKGSNLESNAKESQTER), 144-198 (ERKD…VNQD), and 266-288 (ERSGNATAEESDSEDNSEDDSEV). Phosphoserine is present on serine 150. Positions 160–175 (LQESHTGLVSGYGSSS) are enriched in polar residues. A compositionally biased stretch (acidic residues) spans 176-192 (GEEDEEEDEEEDEENEE). The FF domain maps to 212–266 (DIDERNIFFELFDRYKLDKFSTWSLQSKKIENDPDFYKIRDDTVRESLFEEWCGE). A compositionally biased stretch (acidic residues) spans 274–288 (EESDSEDNSEDDSEV).

As to quaternary structure, component of the precatalytic spliceosomal complex B. Interacts with PRP19.

It is found in the nucleus. Its function is as follows. Component of the spliceosome involved in mRNA processing. The polypeptide is Pre-mRNA-splicing factor URN1 (URN1) (Saccharomyces cerevisiae (strain ATCC 204508 / S288c) (Baker's yeast)).